The following is a 28-amino-acid chain: Dolichyl-diphosphooligosaccharide--protein glycosyltransferase subunit 1 (28 aa).

This sequence belongs to the OST1 family. In terms of assembly, component of the oligosaccharyltransferase (OST) complex.

Its subcellular location is the endoplasmic reticulum membrane. It functions in the pathway protein modification; protein glycosylation. Subunit of the oligosaccharyl transferase (OST) complex that catalyzes the initial transfer of a defined glycan (Glc(3)Man(9)GlcNAc(2) in eukaryotes) from the lipid carrier dolichol-pyrophosphate to an asparagine residue within an Asn-X-Ser/Thr consensus motif in nascent polypeptide chains, the first step in protein N-glycosylation. N-glycosylation occurs cotranslationally and the complex associates with the Sec61 complex at the channel-forming translocon complex that mediates protein translocation across the endoplasmic reticulum (ER). All subunits are required for a maximal enzyme activity. This is Dolichyl-diphosphooligosaccharide--protein glycosyltransferase subunit 1 from Gallus gallus (Chicken).